Consider the following 244-residue polypeptide: 5-oxoprolinase subunit A (244 aa).

This sequence belongs to the LamB/PxpA family. In terms of assembly, forms a complex composed of PxpA, PxpB and PxpC.

The enzyme catalyses 5-oxo-L-proline + ATP + 2 H2O = L-glutamate + ADP + phosphate + H(+). Its function is as follows. Catalyzes the cleavage of 5-oxoproline to form L-glutamate coupled to the hydrolysis of ATP to ADP and inorganic phosphate. In Escherichia coli (strain SMS-3-5 / SECEC), this protein is 5-oxoprolinase subunit A.